The chain runs to 242 residues: Ubiquitin-conjugating enzyme E2 6 (242 aa).

The Cytoplasmic segment spans residues 1–220 (MASRQSQKRL…HSTPSFGVQR (220 aa)). The UBC core domain occupies 5–156 (QSQKRLTKEY…NQRFTKQFPD (152 aa)). Cys-87 acts as the Glycyl thioester intermediate in catalysis. The segment at 170 to 190 (AREQAAATTDSTDPEKPFDVR) is disordered. Residues 221–240 (FTLVGVVVAAFIAAYFNFFS) form a helical membrane-spanning segment.

This sequence belongs to the ubiquitin-conjugating enzyme family.

It localises to the endoplasmic reticulum membrane. The catalysed reaction is S-ubiquitinyl-[E1 ubiquitin-activating enzyme]-L-cysteine + [E2 ubiquitin-conjugating enzyme]-L-cysteine = [E1 ubiquitin-activating enzyme]-L-cysteine + S-ubiquitinyl-[E2 ubiquitin-conjugating enzyme]-L-cysteine.. The protein operates within protein modification; protein ubiquitination. In terms of biological role, catalyzes the covalent attachment of ubiquitin to other proteins. Functions in degradation of misfolded or regulated proteins localized in the endoplasmic reticulum (ER) lumen or membrane via the ubiquitin-proteasome system. Cognate E2 conjugating enzyme for the DOA10 ubiquitin ligase complex, which is part of the ERAD-C pathway responsible for the rapid degradation of membrane proteins with misfolded cytoplasmic domains. This is Ubiquitin-conjugating enzyme E2 6 (UBC6) from Debaryomyces hansenii (strain ATCC 36239 / CBS 767 / BCRC 21394 / JCM 1990 / NBRC 0083 / IGC 2968) (Yeast).